Consider the following 146-residue polypeptide: Hemoglobin subunit beta-2 (146 aa).

The Globin domain occupies 2 to 146 (FLSAEEKGLV…VASALAHRYH (145 aa)). N6-succinyllysine is present on lysine 17. Phosphoserine is present on residues serine 44 and serine 50. N6-succinyllysine is present on lysine 59. The heme b site is built by histidine 63 and histidine 92. An Asymmetric dimethylarginine modification is found at arginine 104.

Belongs to the globin family. As to quaternary structure, heterotetramer of two alpha chains and two beta chains. In terms of tissue distribution, red blood cells.

Functionally, involved in oxygen transport from the lung to the various peripheral tissues. This is Hemoglobin subunit beta-2 (HBB2) from Panthera pardus saxicolor (Northern Persian leopard).